The sequence spans 222 residues: Putative serine proteinase inhibitor 2 homolog second part (222 aa).

It belongs to the serpin family. Poxviruses subfamily.

In Homo sapiens (Human), this protein is Putative serine proteinase inhibitor 2 homolog second part.